We begin with the raw amino-acid sequence, 477 residues long: UDP-N-acetylmuramate--L-alanine ligase (477 aa).

Residue 122–128 (GTHGKTT) coordinates ATP.

Belongs to the MurCDEF family.

It localises to the cytoplasm. The catalysed reaction is UDP-N-acetyl-alpha-D-muramate + L-alanine + ATP = UDP-N-acetyl-alpha-D-muramoyl-L-alanine + ADP + phosphate + H(+). Its pathway is cell wall biogenesis; peptidoglycan biosynthesis. Functionally, cell wall formation. This chain is UDP-N-acetylmuramate--L-alanine ligase, found in Xylella fastidiosa (strain M23).